Here is a 550-residue protein sequence, read N- to C-terminus: Selinene synthase (550 aa).

4 residues coordinate Mg(2+): D314, D318, D450, and E458. The short motif at 314 to 318 is the DDXXD motif element; the sequence is DDIYD.

It belongs to the terpene synthase family. Mg(2+) is required as a cofactor. Requires Mn(2+) as cofactor.

It carries out the reaction (2E,6E)-farnesyl diphosphate = (+)-beta-selinene + diphosphate. It catalyses the reaction (2E,6E)-farnesyl diphosphate = alpha-selinene + diphosphate. The protein operates within secondary metabolite biosynthesis; terpenoid biosynthesis. Its function is as follows. Sesquiterpene synthase that catalyzes the formation of alpha- and beta-selinene from trans,trans-farnesyl diphosphate (FPP). Also produces some nerolidol. The chain is Selinene synthase (SES) from Ocimum basilicum (Sweet basil).